Here is a 189-residue protein sequence, read N- to C-terminus: Inosine triphosphate pyrophosphatase (189 aa).

14 to 19 lines the ITP pocket; it reads TGNQNK. Mg(2+) is bound at residue E42. ITP contacts are provided by residues K54, 70-71, K87, 146-149, K167, and 172-173; these read DT, FGWD, and HR.

It belongs to the HAM1 NTPase family. As to quaternary structure, homodimer. It depends on Mg(2+) as a cofactor. Requires Mn(2+) as cofactor.

It is found in the cytoplasm. Its subcellular location is the nucleus. It catalyses the reaction ITP + H2O = IMP + diphosphate + H(+). The catalysed reaction is dITP + H2O = dIMP + diphosphate + H(+). It carries out the reaction XTP + H2O = XMP + diphosphate + H(+). In terms of biological role, pyrophosphatase that hydrolyzes non-canonical purine nucleotides such as inosine triphosphate (ITP), deoxyinosine triphosphate (dITP) or xanthosine 5'-triphosphate (XTP) to their respective monophosphate derivatives. The enzyme does not distinguish between the deoxy- and ribose forms. Probably excludes non-canonical purines from RNA and DNA precursor pools, thus preventing their incorporation into RNA and DNA and avoiding chromosomal lesions. The chain is Inosine triphosphate pyrophosphatase from Pyricularia oryzae (strain 70-15 / ATCC MYA-4617 / FGSC 8958) (Rice blast fungus).